A 435-amino-acid polypeptide reads, in one-letter code: Amidase 1 (435 aa).

Residues Lys38 and Ser115 each act as charge relay system in the active site. Ser139 acts as the Acyl-ester intermediate in catalysis.

Belongs to the amidase family.

Its subcellular location is the cytoplasm. It localises to the nucleus. It is found in the nucleoplasm. The catalysed reaction is a monocarboxylic acid amide + H2O = a monocarboxylate + NH4(+). Amidase involved in auxin biosynthesis. Converts indole-3-acetamide (IAM) to indole-3-acetate, and phenyl-2-acetamide (PAM) to phenyl-2-acetate. Substrate preference is PAM &gt; IAM. This chain is Amidase 1, found in Oryza sativa subsp. japonica (Rice).